A 767-amino-acid chain; its full sequence is DNA topoisomerase 1 (767 aa).

The segment covering 1–23 has biased composition (basic and acidic residues); sequence MSGDHLHNDSQIEADFRLNDSHK. The interval 1–201 is disordered; that stretch reads MSGDHLHNDS…NKKKKPKKEE (201 aa). Ser2 is modified (N-acetylserine). Ser2 and Ser10 each carry phosphoserine. Residues 24–39 show a composition bias toward basic residues; the sequence is HKDKHKDREHRHKEHK. Residues 40–110 show a composition bias toward basic and acidic residues; that stretch reads KDKDKDREKS…DAKIKKEKEN (71 aa). Position 59 is a phosphoserine (Ser59). A Glycyl lysine isopeptide (Lys-Gly) (interchain with G-Cter in SUMO2) cross-link involves residue Lys103. Lys105 participates in a covalent cross-link: Glycyl lysine isopeptide (Lys-Gly) (interchain with G-Cter in SUMO); alternate. Lys105 participates in a covalent cross-link: Glycyl lysine isopeptide (Lys-Gly) (interchain with G-Cter in SUMO2); alternate. Ser114 carries the phosphoserine modification. Residue Lys119 forms a Glycyl lysine isopeptide (Lys-Gly) (interchain with G-Cter in SUMO); alternate linkage. Lys119 participates in a covalent cross-link: Glycyl lysine isopeptide (Lys-Gly) (interchain with G-Cter in SUMO2); alternate. Residue Lys119 forms a Glycyl lysine isopeptide (Lys-Gly) (interchain with G-Cter in SUMO1); alternate linkage. The segment covering 131 to 168 has biased composition (basic and acidic residues); the sequence is PKEDIKPLKRLRDEDDADYKPKKIKTEDIKKEKKRKSE. Residues Lys136 and Lys150 each participate in a glycyl lysine isopeptide (Lys-Gly) (interchain with G-Cter in SUMO2) cross-link. Residue Lys155 forms a Glycyl lysine isopeptide (Lys-Gly) (interchain with G-Cter in SUMO); alternate linkage. Lys155 participates in a covalent cross-link: Glycyl lysine isopeptide (Lys-Gly) (interchain with G-Cter in SUMO2); alternate. Glycyl lysine isopeptide (Lys-Gly) (interchain with G-Cter in SUMO2) cross-links involve residues Lys160 and Lys166. Residue Lys174 forms a Glycyl lysine isopeptide (Lys-Gly) (interchain with G-Cter in SUMO2); alternate linkage. Lys174 is subject to N6-acetyllysine; alternate. The span at 181 to 201 shows a compositional bias: basic and acidic residues; sequence KDKDKKVAEPDNKKKKPKKEE. Lys206 participates in a covalent cross-link: Glycyl lysine isopeptide (Lys-Gly) (interchain with G-Cter in SUMO2). At Lys282 the chain carries N6-acetyllysine. A Glycyl lysine isopeptide (Lys-Gly) (interchain with G-Cter in SUMO2) cross-link involves residue Lys338. Interaction with DNA regions lie at residues 427–428 and 490–495; these read KY and RAGNEK. Residues 434–767 enclose the Topo IB-type catalytic domain; it reads SSRIKGEKDW…IDMTDEDYEF (334 aa). Phosphoserine; by CK2 is present on Ser508. Lys551 participates in a covalent cross-link: Glycyl lysine isopeptide (Lys-Gly) (interchain with G-Cter in SUMO2). An interaction with DNA region spans residues 587-589; the sequence is TAK. Residues Lys644, Lys702, and Lys714 each participate in a glycyl lysine isopeptide (Lys-Gly) (interchain with G-Cter in SUMO2) cross-link. The active-site O-(3'-phospho-DNA)-tyrosine intermediate is the Tyr725.

This sequence belongs to the type IB topoisomerase family. In terms of assembly, monomer. Interacts with ERCC6. Interacts with TPRN; TPRN interacts with a number of DNA damage response proteins, is recruited to sites of DNA damage and may play a role in DNA damage repair. Post-translationally, sumoylated. Lys-119 is the main site of sumoylation. Sumoylation plays a role in partitioning TOP1 between nucleoli and nucleoplasm. Levels are dramatically increased on camptothecin (CPT) treatment. Phosphorylation at Ser-508 by CK2 increases binding to supercoiled DNA and sensitivity to camptothecin.

The protein resides in the nucleus. The protein localises to the nucleolus. It localises to the nucleoplasm. It catalyses the reaction ATP-independent breakage of single-stranded DNA, followed by passage and rejoining.. Its function is as follows. Releases the supercoiling and torsional tension of DNA introduced during the DNA replication and transcription by transiently cleaving and rejoining one strand of the DNA duplex. Introduces a single-strand break via transesterification at a target site in duplex DNA. The scissile phosphodiester is attacked by the catalytic tyrosine of the enzyme, resulting in the formation of a DNA-(3'-phosphotyrosyl)-enzyme intermediate and the expulsion of a 5'-OH DNA strand. The free DNA strand then rotates around the intact phosphodiester bond on the opposing strand, thus removing DNA supercoils. Finally, in the religation step, the DNA 5'-OH attacks the covalent intermediate to expel the active-site tyrosine and restore the DNA phosphodiester backbone. Regulates the alternative splicing of tissue factor (F3) pre-mRNA in endothelial cells. Involved in the circadian transcription of the core circadian clock component BMAL1 by altering the chromatin structure around the ROR response elements (ROREs) on the BMAL1 promoter. This Mus musculus (Mouse) protein is DNA topoisomerase 1 (Top1).